The primary structure comprises 161 residues: Regulator of ribonuclease activity A (161 aa).

This sequence belongs to the RraA family. Homotrimer. Binds to both RNA-binding sites in the C-terminal region of Rne and to RhlB.

The protein localises to the cytoplasm. Globally modulates RNA abundance by binding to RNase E (Rne) and regulating its endonucleolytic activity. Can modulate Rne action in a substrate-dependent manner by altering the composition of the degradosome. Modulates RNA-binding and helicase activities of the degradosome. The protein is Regulator of ribonuclease activity A of Pectobacterium atrosepticum (strain SCRI 1043 / ATCC BAA-672) (Erwinia carotovora subsp. atroseptica).